A 492-amino-acid polypeptide reads, in one-letter code: MVVSKSSPLIFERSREGRYAYSLPQSDIKTDSVESILDDKFIRKNKAEFPEVAELDLVRHYTELSNKNFGVDSGFYPLGSCTMKYNPKINEKVARIPGFAESHPLQEEGQVQGSLEIVYSLQEELKEITGMDEVTLQPAAGAHGEWTALMIFKAYHLDNGEGHRDEVIVPDSAHGTNPASASFAGFKAVTVKSNERGEVDIEDLKRVVNENTAAIMLTNPNTLGIFEKNIMEIREIVHEAGGLLYYDGANLNAIMDKVRPGDMGFDAVHLNLHKTFTGPHGGGGPGSGPVGVKKELASYLPKPMVIKDGDTFKYDNDIKNSIGRVKPFYGNFGIYLRAYTYIRTMGAEGLREVSEAAVLNANYIKASLKDHYEIPYEQYCKHEFVLSGSKQKEHGVRTLDMAKRLLDFGVHPPTIYFPLNVEEGMMIEPTETESKETLDYFIDAMIQIAEEAKNDPDKVLEAPHSTIIDRLDETTAARKPVLKFDNLHEEKE.

The residue at position 274 (lysine 274) is an N6-(pyridoxal phosphate)lysine.

Belongs to the GcvP family. C-terminal subunit subfamily. As to quaternary structure, the glycine cleavage system is composed of four proteins: P, T, L and H. In this organism, the P 'protein' is a heterodimer of two subunits. It depends on pyridoxal 5'-phosphate as a cofactor.

The enzyme catalyses N(6)-[(R)-lipoyl]-L-lysyl-[glycine-cleavage complex H protein] + glycine + H(+) = N(6)-[(R)-S(8)-aminomethyldihydrolipoyl]-L-lysyl-[glycine-cleavage complex H protein] + CO2. Its function is as follows. The glycine cleavage system catalyzes the degradation of glycine. The P protein binds the alpha-amino group of glycine through its pyridoxal phosphate cofactor; CO(2) is released and the remaining methylamine moiety is then transferred to the lipoamide cofactor of the H protein. The protein is Probable glycine dehydrogenase (decarboxylating) subunit 2 of Staphylococcus haemolyticus (strain JCSC1435).